A 485-amino-acid polypeptide reads, in one-letter code: Glutamyl-tRNA(Gln) amidotransferase subunit A (485 aa).

Residues lysine 78 and serine 153 each act as charge relay system in the active site. Catalysis depends on serine 177, which acts as the Acyl-ester intermediate.

The protein belongs to the amidase family. GatA subfamily. As to quaternary structure, heterotrimer of A, B and C subunits.

The catalysed reaction is L-glutamyl-tRNA(Gln) + L-glutamine + ATP + H2O = L-glutaminyl-tRNA(Gln) + L-glutamate + ADP + phosphate + H(+). Allows the formation of correctly charged Gln-tRNA(Gln) through the transamidation of misacylated Glu-tRNA(Gln) in organisms which lack glutaminyl-tRNA synthetase. The reaction takes place in the presence of glutamine and ATP through an activated gamma-phospho-Glu-tRNA(Gln). The polypeptide is Glutamyl-tRNA(Gln) amidotransferase subunit A (Bacillus cereus (strain ZK / E33L)).